A 74-amino-acid chain; its full sequence is Putative defensin-like protein 128 (74 aa).

An N-terminal signal peptide occupies residues 1 to 24 (MSKLTNVVIFIVFFLGMMAKETQG). Cystine bridges form between cysteine 28/cysteine 72, cysteine 37/cysteine 56, cysteine 42/cysteine 66, and cysteine 46/cysteine 68.

Belongs to the DEFL family.

Its subcellular location is the secreted. The polypeptide is Putative defensin-like protein 128 (LCR8) (Arabidopsis thaliana (Mouse-ear cress)).